A 401-amino-acid polypeptide reads, in one-letter code: Tyrosine--tRNA ligase (401 aa).

Residues 41–50 carry the 'HIGH' region motif; it reads PSRPDLHLGH. The 'KMSKS' region motif lies at 225–229; it reads KMSKS. Lys228 is an ATP binding site. The S4 RNA-binding domain maps to 334-395; that stretch reads KNIVDLLVEI…GKRKFYRISG (62 aa).

The protein belongs to the class-I aminoacyl-tRNA synthetase family. TyrS type 2 subfamily. Homodimer.

The protein resides in the cytoplasm. It catalyses the reaction tRNA(Tyr) + L-tyrosine + ATP = L-tyrosyl-tRNA(Tyr) + AMP + diphosphate + H(+). Functionally, catalyzes the attachment of tyrosine to tRNA(Tyr) in a two-step reaction: tyrosine is first activated by ATP to form Tyr-AMP and then transferred to the acceptor end of tRNA(Tyr). The polypeptide is Tyrosine--tRNA ligase (Thermotoga maritima (strain ATCC 43589 / DSM 3109 / JCM 10099 / NBRC 100826 / MSB8)).